The sequence spans 277 residues: NH(3)-dependent NAD(+) synthetase (277 aa).

36-43 lines the ATP pocket; it reads GLSGGIDS. Mg(2+) is bound at residue Asp-42. Arg-118 is a deamido-NAD(+) binding site. Thr-138 provides a ligand contact to ATP. Residue Glu-143 coordinates Mg(2+). Positions 167 and 189 each coordinate ATP.

It belongs to the NAD synthetase family. Homodimer.

It catalyses the reaction deamido-NAD(+) + NH4(+) + ATP = AMP + diphosphate + NAD(+) + H(+). Its pathway is cofactor biosynthesis; NAD(+) biosynthesis; NAD(+) from deamido-NAD(+) (ammonia route): step 1/1. Catalyzes the ATP-dependent amidation of deamido-NAD to form NAD. Uses ammonia as a nitrogen source. In Chlorobium phaeovibrioides (strain DSM 265 / 1930) (Prosthecochloris vibrioformis (strain DSM 265)), this protein is NH(3)-dependent NAD(+) synthetase.